A 208-amino-acid chain; its full sequence is Protein-L-isoaspartate O-methyltransferase (208 aa).

Serine 59 is an active-site residue.

This sequence belongs to the methyltransferase superfamily. L-isoaspartyl/D-aspartyl protein methyltransferase family.

Its subcellular location is the cytoplasm. It carries out the reaction [protein]-L-isoaspartate + S-adenosyl-L-methionine = [protein]-L-isoaspartate alpha-methyl ester + S-adenosyl-L-homocysteine. In terms of biological role, catalyzes the methyl esterification of L-isoaspartyl residues in peptides and proteins that result from spontaneous decomposition of normal L-aspartyl and L-asparaginyl residues. It plays a role in the repair and/or degradation of damaged proteins. The polypeptide is Protein-L-isoaspartate O-methyltransferase (Yersinia enterocolitica serotype O:8 / biotype 1B (strain NCTC 13174 / 8081)).